The following is a 39-amino-acid chain: Potassium channel toxin alpha-KTx 2.1 (39 aa).

Cystine bridges form between C7/C29, C13/C34, and C17/C36. The tract at residues 26 to 34 (GAKCMNGKC) is interaction with Ca(2+)-activated K(+) channels. An Asparagine amide modification is found at N39.

Belongs to the short scorpion toxin superfamily. Potassium channel inhibitor family. Alpha-KTx 02 subfamily. Expressed by the venom gland.

The protein resides in the secreted. Functionally, blocks voltage-gated potassium channels (mKv1.1/KCNA1 (Kd&gt;25 nM), rKv1.2/KCNA2 (Kd=2 nM), mKv1.3/KCNA3 (Kd=1 nM), hKv1.5/KCNA5 (Kd&gt;25 nM) and mKv3.1/KCNC1 (Kd&gt;25 nM)) and calcium-activated potassium channels (KCa1.1/KCNMA1 and KCa3.1/KCNN4, Kd&gt;25 nM). The sequence is that of Potassium channel toxin alpha-KTx 2.1 from Centruroides noxius (Mexican scorpion).